Here is a 571-residue protein sequence, read N- to C-terminus: Sulfite reductase [NADPH] hemoprotein beta-component (571 aa).

[4Fe-4S] cluster is bound by residues C436, C442, C481, and C485. C485 contributes to the siroheme binding site.

This sequence belongs to the nitrite and sulfite reductase 4Fe-4S domain family. In terms of assembly, alpha(8)-beta(8). The alpha component is a flavoprotein, the beta component is a hemoprotein. Requires siroheme as cofactor. [4Fe-4S] cluster is required as a cofactor.

The enzyme catalyses hydrogen sulfide + 3 NADP(+) + 3 H2O = sulfite + 3 NADPH + 4 H(+). It functions in the pathway sulfur metabolism; hydrogen sulfide biosynthesis; hydrogen sulfide from sulfite (NADPH route): step 1/1. Its function is as follows. Component of the sulfite reductase complex that catalyzes the 6-electron reduction of sulfite to sulfide. This is one of several activities required for the biosynthesis of L-cysteine from sulfate. This chain is Sulfite reductase [NADPH] hemoprotein beta-component, found in Anoxybacillus flavithermus (strain DSM 21510 / WK1).